Here is a 580-residue protein sequence, read N- to C-terminus: MDPYCPFDALDVWEHRRFIVADSRNFITPEFPRDFWMSPVFNLPRETAAEQVVVLQAQRTAAAAALENAAMQAAELPVDIERRLRPIERNVHEIAGALEALETAAAAAEEADAARGDEPAGGGDGGAPPGLAVAEMEVQIVRNDPPLRYDTNLPVDLLHMVYAGRGATGSSGVVFGTWYRTIQDRTITDFPLTTRSADFRDGRMSKTFMTALVLSLQACGRLYVGQRHYSAFECAVLCLYLLYRNTHGAADDSDRAPVTFGDLLGRLPRYLACLAAVIGTEGGRPQYRYRDDKLPKTQFAAGGGRYEHGALASHIVIATLMHHGVLPAAPGDVPRDASTHVNPDGVAHHDDINRAAAAFLSRGHNLFLWEDQTLLRATANTITALGVIQRLLANGNVYADRLNNRLQLGMLIPGAVPSEAIARGASGSDSGAIKSGDNNLEALCANYVLPLYRADPAVELTQLFPGLAALCLDAQAGRPVGSTRRVVDMSSGARQAALVRLTALELINRTRTNPTPVGEVIHAHDALAIQYEQGLGLLAQQARIGLGSNTKRFSAFNVSSDYDMLYFLCLGFIPQYLSAV.

2 interaction with major capsid protein/MCP regions span residues 1–49 and 1–50; these read MDPY…ETAA and MDPY…TAAE. Residues 108-129 are disordered; the sequence is AEEADAARGDEPAGGGDGGAPP. Over residues 119–128 the composition is skewed to gly residues; the sequence is PAGGGDGGAP.

Belongs to the herpesviridae CVC2 protein family. In terms of assembly, heterodimerizes with CVC1. Interacts with major capsid protein/MCP and triplex capsid protein 1/TRX1 at the pentamer vertices. Interacts with the large tegument protein/LTP. Interacts with host NUP214; this interaction might be essential to the capsid docking to the host nuclear pore. Interacts with host TMEM250.

Its subcellular location is the virion. It localises to the host nucleus. Functionally, capsid vertex-specific component that plays a role during viral DNA encapsidation, assuring correct genome cleavage and presumably stabilizing capsids that contain full-length viral genomes. Participates in the interaction between the capsid and the tegument through interaction with the large tegument protein/LTP. May mediate the capsid docking to the nuclear pore allowing entry of the viral genome into the host nucleus through binding to host nucleoporins NUP214. The chain is Capsid vertex component 2 from Human herpesvirus 1 (strain 17) (HHV-1).